A 710-amino-acid chain; its full sequence is Solute carrier organic anion transporter family member 3A1 (710 aa).

Position 1 is an N-acetylmethionine (Met1). Residues 1–15 (MQGKKPGGSSGGGRS) show a composition bias toward gly residues. Positions 1 to 25 (MQGKKPGGSSGGGRSGELQGDEAQR) are disordered. Residues 1-40 (MQGKKPGGSSGGGRSGELQGDEAQRNKKKKKKVSCFSNIK) are Cytoplasmic-facing. The helical transmembrane segment at 41–60 (IFLVSECALMLAQGTVGAYL) threads the bilayer. The Extracellular segment spans residues 61 to 79 (VSVLTTLERRFNLQSADVG). The chain crosses the membrane as a helical span at residues 80–100 (VIASSFEIGNLALILFVSYFG). Topologically, residues 101 to 106 (ARGHRP) are cytoplasmic. Residues 107 to 131 (RLIGCGGIVMALGALLSALPEFLTH) traverse the membrane as a helical segment. The Extracellular segment spans residues 132-174 (QYKYEAGEIRWGAEGRDVCAANGSGGDEGPDPDLICRNRTATN). N-linked (GlcNAc...) asparagine glycans are attached at residues Asn153 and Asn169. Residues 175 to 203 (MMYLLLIGAQVLLGIGATPVQPLGVSYID) form a helical membrane-spanning segment. At 204–222 (DHVRRKDSSLYIGILFTML) the chain is on the cytoplasmic side. The chain crosses the membrane as a helical span at residues 223–243 (VFGPACGFILGSFCTKIYVDA). Residues 244 to 261 (VFIDTSNLDITPDDPRWI) are Extracellular-facing. The chain crosses the membrane as a helical span at residues 262–286 (GAWWGGFLLCGALLFFSSLLMFGFP). Over 287–344 (QSLPPHSEPAMESEQAMLSEREYERPKPSNGVLRHPLEPDSSASCFQQLRVIPKVTKH) the chain is Cytoplasmic. The helical transmembrane segment at 345 to 366 (LLSNPVFTCIILAACMEIAVVA) threads the bilayer. Topologically, residues 367–386 (GFAAFLGKYLEQQFNLTTSS) are extracellular. Residue Asn381 is glycosylated (N-linked (GlcNAc...) asparagine). Residues 387–410 (ANQLLGMTAIPCACLGIFLGGLLV) form a helical membrane-spanning segment. Topologically, residues 411–414 (KKLS) are cytoplasmic. A helical transmembrane segment spans residues 415–438 (LSALGAIRMAMLVNLVSTACYVSF). Topologically, residues 439-539 (LFLGCDTGPV…PGCQEAFLTF (101 aa)) are extracellular. Asn457 is a glycosylation site (N-linked (GlcNAc...) asparagine). In terms of domain architecture, Kazal-like spans 465 to 513 (LDPYSPCNNNCECQTDSFTPVCGADGITYLSACFAGCNSTNLTGCACLT). Cystine bridges form between Cys471/Cys501, Cys477/Cys497, and Cys486/Cys511. 3 N-linked (GlcNAc...) asparagine glycosylation sites follow: Asn502, Asn505, and Asn519. Residues 540-562 (LCVMCICSLIGAMAQTPSVIILI) form a helical membrane-spanning segment. The Cytoplasmic portion of the chain corresponds to 563–571 (RTVSPELKS). A helical membrane pass occupies residues 572-597 (YALGVLFLLLRLLGFIPPPLIFGAGI). At 598 to 630 (DSTCLFWSTFCGEQGACVLYDNVVYRYLYVSIA) the chain is on the extracellular side. Residues 631–648 (IALKSFAFILYTTTWQCL) traverse the membrane as a helical segment. The Cytoplasmic segment spans residues 649 to 705 (RKNYKRYIKNHEGGLSTSEFFASTLTLDNLGRDPVPANQTHRTKFIYNLEDHEWCEN).

This sequence belongs to the organo anion transporter (TC 2.A.60) family. In terms of tissue distribution, generally the expression of isoform 1 is higher than that of isoform 2. Expressed in placental trophoblasts. Expressed in pancreas, kidney, liver, lung, brain, heart, cerebellum, peripheral blood leukocyte, colon, small intestine, ovary, testis, prostate, thyroid, thymus and spleen. Expressed in fetal brain, heart, kidney, liver, lung, skeletal muscle, spleen and pancreas. In testis, detected in spermatogonia at different stages and absent from Sertoli cells. Expressed in the choroid plexus epithelium, at the basolateral membrane. In brain, also very abundant in the gray matter of the frontal cortex, but not associated with neuronal cell bodies. Not detected in the white matter. As to expression, expressed in heart, brain, cerebellum, testis, lung, thyroid, spoleen and liver. In testis, primarily localized to the basal membrane of Sertoli cells and weakly expressed within the tubules. In testis, also present in spermatogonia at different stages. In brain, expressed in the choroid plexus epithelium, at the apical membrane as well as in the subapical intracellular vesicular compartments. In brain, also associated with neuronal bodies and axons in both the gray and the white matters of the frontal cortex.

The protein localises to the basolateral cell membrane. It is found in the apical cell membrane. It localises to the basal cell membrane. It catalyses the reaction L-thyroxine(out) = L-thyroxine(in). The enzyme catalyses prostaglandin E1(out) = prostaglandin E1(in). It carries out the reaction prostaglandin E2(out) = prostaglandin E2(in). The catalysed reaction is prostaglandin F2alpha(out) = prostaglandin F2alpha(in). It catalyses the reaction (5Z,8Z,11Z,14Z)-eicosatetraenoate(out) = (5Z,8Z,11Z,14Z)-eicosatetraenoate(in). The enzyme catalyses taurocholate(out) = taurocholate(in). It carries out the reaction glycocholate(out) = glycocholate(in). The catalysed reaction is estrone 3-sulfate(out) = estrone 3-sulfate(in). It catalyses the reaction argipressin(out) = argipressin(in). Its activity is regulated as follows. Stimulated by extracellular acidic pH. Its function is as follows. Putative organic anion antiporter with apparent broad substrate specificity. Recognizes various substrates including thyroid hormone L-thyroxine, prostanoids such as prostaglandin E1 and E2, bile acids such as taurocholate, glycolate and glycochenodeoxycholate and peptide hormones such as L-arginine vasopressin, likely operating in a tissue-specific manner. The transport mechanism, its electrogenicity and potential tissue-specific counterions remain to be elucidated. This is Solute carrier organic anion transporter family member 3A1 (SLCO3A1) from Homo sapiens (Human).